The sequence spans 103 residues: Acyl carrier protein (103 aa).

The Carrier domain maps to 14 to 89 (NIVSNIVQDI…EFIDFTLQTI (76 aa)). Serine 49 bears the O-(pantetheine 4'-phosphoryl)serine mark.

It belongs to the acyl carrier protein (ACP) family. In terms of processing, 4'-phosphopantetheine is transferred from CoA to a specific serine of apo-ACP by AcpS. This modification is essential for activity because fatty acids are bound in thioester linkage to the sulfhydryl of the prosthetic group.

The protein localises to the plastid. It localises to the cyanelle. The protein operates within lipid metabolism; fatty acid biosynthesis. Carrier of the growing fatty acid chain in fatty acid biosynthesis. This Cyanophora paradoxa protein is Acyl carrier protein.